The chain runs to 88 residues: N-alpha-acetyltransferase 38, NatC auxiliary subunit (88 aa).

The region spanning 1–72 (MDILKLSDFI…VKTIMIDKPV (72 aa)) is the Sm domain.

As to quaternary structure, component of the N-terminal acetyltransferase C (NatC) complex, composed of the catalytic subunit Naa30/MAK3, a large auxiliary subunit Naa35/MAK10 and a small auxiliary subunit Naa38/MAK31.

Its function is as follows. Component of the NatC N-terminal acetyltransferase, which associates with the ribosome to acetylate nascent protein chains in a cotranslational manner. NatC acetylates protein N-termini starting with methionine, followed by a hydrophobic or amphipathic amino acid, with amino acids at positions 3 and 4 also contributing to NatC recognition. The first 4 amino acids of cognate substrates are recognized at the Naa30/MAK3-Naa35/MAK10 interface. NatC-dependent acetylation targets various substrate proteins to specific subcellular sites, including isoform 2 of tRNA-specific methyltransferase Trm1 to the inner nuclear membrane. Catalyzes the acetylation of the N-terminal Met of ARF-like GTPase ARL3, which is required for its Golgi localization via interaction with the Golgi-localized integral membrane protein SYS1, which may serve as a receptor for acetylated ARL3. Catalyzes the acetylation of the N-terminal Met of L-A virus Gag protein. MAK31 is necessary for the structural stability of L-A double-stranded RNA-containing particles. Necessary for growth at 37 degrees Celsius as well as for maintenance of the killer plasmid. This chain is N-alpha-acetyltransferase 38, NatC auxiliary subunit (MAK31), found in Saccharomyces cerevisiae (strain ATCC 204508 / S288c) (Baker's yeast).